Reading from the N-terminus, the 359-residue chain is 2-epi-5-epi-valiolone 7-kinase (359 aa).

Residues 28–48 (GGLGEVHTTPSPGHARRPGAG) form a disordered region.

The protein belongs to the ROK (NagC/XylR) family.

It catalyses the reaction 2-epi-5-epi-valiolone + ATP = 2-epi-5-epi-valiolone 7-phosphate + ADP + H(+). Functionally, catalyzes the conversion of 2-epi-5-epi-valiolone to 2-epi-5-epi-valiolone 7-phosphate. Involved in the biosynthesis of the acarviose moiety of the alpha-glucosidase inhibitor acarbose. The chain is 2-epi-5-epi-valiolone 7-kinase from Actinoplanes sp. (strain ATCC 31044 / CBS 674.73 / SE50/110).